Consider the following 129-residue polypeptide: Large ribosomal subunit protein eL32 (129 aa).

Belongs to the eukaryotic ribosomal protein eL32 family.

The sequence is that of Large ribosomal subunit protein eL32 (rpl32e) from Methanosarcina mazei (strain ATCC BAA-159 / DSM 3647 / Goe1 / Go1 / JCM 11833 / OCM 88) (Methanosarcina frisia).